Consider the following 202-residue polypeptide: MNVLRKIVKKCRDEDTQKPSPVSAPPYDDDLWLPPPEYVPLKELTSKKNMRNFCVNGEVKACSPNGYSFRILRHILRSFNEIYSGNHRMVGLVKVVVGLALSGAPVPEGMNWVYKLRRTLIFQWADSRGPLEGEELEYSQEITWDDDTEFVGLQIRVSARQCHIQGRIWCINTNSRACQLWSDMSLQTQRSEEDKDSSLLLE.

The PPXY motif motif lies at 35–38 (PPEY). The tract at residues 115–151 (KLRRTLIFQWADSRGPLEGEELEYSQEITWDDDTEFV) is essential for glycoprotein binding.

It belongs to the lyssavirus matrix protein family. In terms of assembly, homomultimer. Interacts with nucleoprotein and with the cytoplasmic domain of glycoprotein. Interacts with host ATP6V1A; this interaction plays an important role in virion uncoating after viral entry.

The protein localises to the virion membrane. It localises to the host endomembrane system. It is found in the host cytoplasm. In terms of biological role, plays a major role in assembly, budding and uncoating of virion after membrane fusion. Completely covers the ribonucleoprotein coil and keep it in condensed bullet-shaped form. Inhibits viral transcription and stimulates replication. Plays a major role in early induction of TRAIL-mediated apoptosis in infected neurons. Inhibits the integrated stress response (ISR) in the infected cell by blocking the formation of stress granules. The sequence is that of Matrix protein (M) from Homo sapiens (Human).